We begin with the raw amino-acid sequence, 90 residues long: Small ribosomal subunit protein bS20 (90 aa).

Positions Met1–Ser10 are enriched in polar residues. The segment at Met1–Lys25 is disordered.

It belongs to the bacterial ribosomal protein bS20 family.

Functionally, binds directly to 16S ribosomal RNA. This chain is Small ribosomal subunit protein bS20, found in Orientia tsutsugamushi (strain Boryong) (Rickettsia tsutsugamushi).